The primary structure comprises 270 residues: UPF0354 protein BcerKBAB4_4524 (270 aa).

Belongs to the UPF0354 family.

The protein is UPF0354 protein BcerKBAB4_4524 of Bacillus mycoides (strain KBAB4) (Bacillus weihenstephanensis).